Consider the following 580-residue polypeptide: Adenine deaminase (580 aa).

Belongs to the metallo-dependent hydrolases superfamily. Adenine deaminase family. Requires Mn(2+) as cofactor.

It carries out the reaction adenine + H2O + H(+) = hypoxanthine + NH4(+). The chain is Adenine deaminase from Listeria monocytogenes serovar 1/2a (strain ATCC BAA-679 / EGD-e).